Reading from the N-terminus, the 353-residue chain is MSTKDIFFNPIWDVRMTDTSLRDGSHHKRHQFTKDEVGAIVAALDTAGVPVIEVTHGDGLGGSSFNYGFSKTPEQELIKLAAETAKEAKIAFLMLPGVGTKEDIKEAQNNGGSICRIATHCTEADVSIQHFGLARELGLETVGFLMMSHTIPPEKLAQQARIMADAGCQCVYVVDSAGALVLEGVRDRVAALVAELGDDAQVGFHGHENLGLGVANSVEAVRAGAKQIDGSCRRFGAGAGNAPVEALIGVFDKIGVKTGIDFFDIADAAEEVVAPAMPAECLLDRNALIMGYSGVYSSFLKHAIRQSERYGVPAHQLLHRAGQRKLIGGQEDQLIDIALEIKREQDSGATAAH.

The Pyruvate carboxyltransferase domain maps to 14–266; sequence VRMTDTSLRD…KTGIDFFDIA (253 aa). 22–23 serves as a coordination point for substrate; it reads RD. Asp23 is a Mn(2+) binding site. His26 (proton acceptor) is an active-site residue. Substrate-binding residues include Ser176 and His205. Mn(2+) contacts are provided by His205 and His207. Tyr296 contacts substrate.

Belongs to the 4-hydroxy-2-oxovalerate aldolase family.

The catalysed reaction is (S)-4-hydroxy-2-oxopentanoate = acetaldehyde + pyruvate. The sequence is that of 4-hydroxy-2-oxovalerate aldolase 1 from Mycobacterium sp. (strain KMS).